Reading from the N-terminus, the 127-residue chain is MGKAKAPRQLKDNEAKAVARTLRVSPQKLNLVASMIRGKKVNAALADLTFSRKRIAGTVKKTLESAIANAENNHDLDVDALIVAEAYVGKSIVMKRFHVRGRASRIEKPFSHLTIVVREVAEKGEAA.

The protein belongs to the universal ribosomal protein uL22 family. Part of the 50S ribosomal subunit.

Its function is as follows. This protein binds specifically to 23S rRNA; its binding is stimulated by other ribosomal proteins, e.g. L4, L17, and L20. It is important during the early stages of 50S assembly. It makes multiple contacts with different domains of the 23S rRNA in the assembled 50S subunit and ribosome. In terms of biological role, the globular domain of the protein is located near the polypeptide exit tunnel on the outside of the subunit, while an extended beta-hairpin is found that lines the wall of the exit tunnel in the center of the 70S ribosome. The chain is Large ribosomal subunit protein uL22 from Brucella suis (strain ATCC 23445 / NCTC 10510).